Here is a 217-residue protein sequence, read N- to C-terminus: Ribonuclease HII (217 aa).

In terms of domain architecture, RNase H type-2 spans 25-215; sequence KLIAGVDESG…VKHVISDINR (191 aa). Residues D31, E32, and D123 each contribute to the a divalent metal cation site.

It belongs to the RNase HII family. Mn(2+) serves as cofactor. Requires Mg(2+) as cofactor.

The protein resides in the cytoplasm. It carries out the reaction Endonucleolytic cleavage to 5'-phosphomonoester.. Its function is as follows. Endonuclease that specifically degrades the RNA of RNA-DNA hybrids. The polypeptide is Ribonuclease HII (Blochmanniella pennsylvanica (strain BPEN)).